Consider the following 686-residue polypeptide: Methionine--tRNA ligase (686 aa).

The 'HIGH' region signature appears at 15–25; the sequence is PYANGSIHLGH. Zn(2+) contacts are provided by Cys-146, Cys-149, Cys-159, and Cys-162. Positions 332 to 336 match the 'KMSKS' region motif; it reads KMSKS. Lys-335 contacts ATP. In terms of domain architecture, tRNA-binding spans 585–686; sequence AFEAVDMRIA…EGAQPGMRVM (102 aa).

The protein belongs to the class-I aminoacyl-tRNA synthetase family. MetG type 1 subfamily. In terms of assembly, homodimer. Zn(2+) is required as a cofactor.

The protein localises to the cytoplasm. It carries out the reaction tRNA(Met) + L-methionine + ATP = L-methionyl-tRNA(Met) + AMP + diphosphate. Functionally, is required not only for elongation of protein synthesis but also for the initiation of all mRNA translation through initiator tRNA(fMet) aminoacylation. This Aliivibrio salmonicida (strain LFI1238) (Vibrio salmonicida (strain LFI1238)) protein is Methionine--tRNA ligase.